The chain runs to 695 residues: Follicle-stimulating hormone receptor (695 aa).

A signal peptide spans 1–17 (MSLLLVSLLAFLTLGSG). Intrachain disulfides connect Cys18/Cys25 and Cys23/Cys32. Residues 18–46 (CHHRICHCSNGVFLCQESKVTEIPPDLPR) enclose the LRRNT domain. Residues 18–366 (CHHRICHCSN…EDIMGHDILR (349 aa)) lie on the Extracellular side of the membrane. 9 LRR repeats span residues 49-72 (VELR…FGDL), 73-97 (EKIE…LPKL), 98-118 (HEIR…AFQN), 119-143 (LPNL…KIQS), 144-169 (LQKV…VGLS), 170-192 (FESM…AFNG), 193-216 (TQLD…VFQG), 217-240 (ASGP…GLEN), and 241-259 (LKKL…PSLE). N-linked (GlcNAc...) asparagine glycans are attached at residues Asn191 and Asn199. 4 disulfide bridges follow: Cys275–Cys346, Cys276–Cys292, Cys276–Cys356, and Cys292–Cys338. N-linked (GlcNAc...) asparagine glycosylation is present at Asn293. Tyr335 carries the post-translational modification Sulfotyrosine. Residues 367–387 (VLIWFISILAITGNIIVLVIL) traverse the membrane as a helical segment. The Cytoplasmic segment spans residues 388–398 (ITSQYKLTVPR). Residues 399-421 (FLMCNLAFADLCIGIYLLLIASV) traverse the membrane as a helical segment. The Extracellular portion of the chain corresponds to 422–443 (DIHTKTQYHNYAIDWQTGAGCD). Cys442 and Cys517 are joined by a disulfide. Residues 444–465 (AAGFFTVFASELSVYTLTAITL) traverse the membrane as a helical segment. Residues 466-485 (ERWHTITHAMQLQCKVQLRH) lie on the Cytoplasmic side of the membrane. The helical transmembrane segment at 486–508 (AASIMLVGWIFAFTVALFPIFGI) threads the bilayer. At 509–528 (SSYMKVSICLPMDIDSPLSQ) the chain is on the extracellular side. The chain crosses the membrane as a helical span at residues 529–550 (LYVVSLLVLNVLAFVVICGCYT). The Cytoplasmic portion of the chain corresponds to 551–573 (HIYLTVRNPNIMSSSSDTKIAKR). The chain crosses the membrane as a helical span at residues 574–597 (MAMLIFTDFLCMAPISFFAISASL). Topologically, residues 598 to 608 (KVPLITVSKSK) are extracellular. Residues 609–630 (ILLVLFYPINSCANPFLYAIFT) form a helical membrane-spanning segment. Over 631-695 (KNFRRDVFIL…LIPLSRLAQN (65 aa)) the chain is Cytoplasmic.

The protein belongs to the G-protein coupled receptor 1 family. FSH/LSH/TSH subfamily. In terms of assembly, homotrimer. Functions as a homotrimer binding the FSH hormone heterodimer composed of CGA and FSHB. Interacts with ARRB2. Interacts with APPL2; interaction is independent of follicle stimulating hormone stimulation. N-glycosylated; indirectly required for FSH-binding, possibly via a conformational change that allows high affinity binding of hormone. Post-translationally, sulfated.

Its subcellular location is the cell membrane. In terms of biological role, g protein-coupled receptor for follitropin, the follicle-stimulating hormone. Through cAMP production activates the downstream PI3K-AKT and ERK1/ERK2 signaling pathways. This Sus scrofa (Pig) protein is Follicle-stimulating hormone receptor (FSHR).